Here is a 256-residue protein sequence, read N- to C-terminus: Thiazole synthase (256 aa).

The Schiff-base intermediate with DXP role is filled by Lys95. Residues Gly156, 182 to 183 (AG), and 204 to 205 (NT) each bind 1-deoxy-D-xylulose 5-phosphate.

This sequence belongs to the ThiG family. As to quaternary structure, homotetramer. Forms heterodimers with either ThiH or ThiS.

It localises to the cytoplasm. It carries out the reaction [ThiS sulfur-carrier protein]-C-terminal-Gly-aminoethanethioate + 2-iminoacetate + 1-deoxy-D-xylulose 5-phosphate = [ThiS sulfur-carrier protein]-C-terminal Gly-Gly + 2-[(2R,5Z)-2-carboxy-4-methylthiazol-5(2H)-ylidene]ethyl phosphate + 2 H2O + H(+). The protein operates within cofactor biosynthesis; thiamine diphosphate biosynthesis. Catalyzes the rearrangement of 1-deoxy-D-xylulose 5-phosphate (DXP) to produce the thiazole phosphate moiety of thiamine. Sulfur is provided by the thiocarboxylate moiety of the carrier protein ThiS. In vitro, sulfur can be provided by H(2)S. The chain is Thiazole synthase from Salmonella typhi.